A 977-amino-acid chain; its full sequence is DNA-directed RNA polymerase 3A, chloroplastic (977 aa).

The N-terminal 72 residues, 1 to 72 (MASTASYSPS…NNIQSQTTVC (72 aa)), are a transit peptide targeting the chloroplast. Active-site residues include D678, K753, and D910.

It belongs to the phage and mitochondrial RNA polymerase family.

It localises to the plastid. The protein localises to the chloroplast. It catalyses the reaction RNA(n) + a ribonucleoside 5'-triphosphate = RNA(n+1) + diphosphate. Its function is as follows. DNA-dependent RNA polymerase catalyzes the transcription of DNA into RNA using the four ribonucleoside triphosphates as substrates. This is DNA-directed RNA polymerase 3A, chloroplastic (RPOT3-SYL) from Nicotiana tabacum (Common tobacco).